The sequence spans 98 residues: Putative septation protein SpoVG (98 aa).

Belongs to the SpoVG family.

Its function is as follows. Could be involved in septation. This chain is Putative septation protein SpoVG, found in Alkaliphilus metalliredigens (strain QYMF).